The primary structure comprises 461 residues: Argininosuccinate lyase (461 aa).

Belongs to the lyase 1 family. Argininosuccinate lyase subfamily.

Its subcellular location is the cytoplasm. It carries out the reaction 2-(N(omega)-L-arginino)succinate = fumarate + L-arginine. It participates in amino-acid biosynthesis; L-arginine biosynthesis; L-arginine from L-ornithine and carbamoyl phosphate: step 3/3. The chain is Argininosuccinate lyase from Dehalococcoides mccartyi (strain CBDB1).